The sequence spans 481 residues: Probable glycine dehydrogenase (decarboxylating) subunit 2 (481 aa).

At Lys265 the chain carries N6-(pyridoxal phosphate)lysine.

It belongs to the GcvP family. C-terminal subunit subfamily. The glycine cleavage system is composed of four proteins: P, T, L and H. In this organism, the P 'protein' is a heterodimer of two subunits. It depends on pyridoxal 5'-phosphate as a cofactor.

The catalysed reaction is N(6)-[(R)-lipoyl]-L-lysyl-[glycine-cleavage complex H protein] + glycine + H(+) = N(6)-[(R)-S(8)-aminomethyldihydrolipoyl]-L-lysyl-[glycine-cleavage complex H protein] + CO2. In terms of biological role, the glycine cleavage system catalyzes the degradation of glycine. The P protein binds the alpha-amino group of glycine through its pyridoxal phosphate cofactor; CO(2) is released and the remaining methylamine moiety is then transferred to the lipoamide cofactor of the H protein. This is Probable glycine dehydrogenase (decarboxylating) subunit 2 from Thermosipho melanesiensis (strain DSM 12029 / CIP 104789 / BI429).